Consider the following 481-residue polypeptide: Cysteine--tRNA ligase (481 aa).

Cys-43 contributes to the Zn(2+) binding site. The 'HIGH' region motif lies at 45-55; the sequence is ATVQGLPHIGH. Zn(2+) is bound by residues Cys-221, His-246, and Glu-250. Residues 277–281 carry the 'KMSKS' region motif; it reads KMSKS. Lys-280 provides a ligand contact to ATP.

Belongs to the class-I aminoacyl-tRNA synthetase family. In terms of assembly, monomer. Zn(2+) serves as cofactor.

It localises to the cytoplasm. It carries out the reaction tRNA(Cys) + L-cysteine + ATP = L-cysteinyl-tRNA(Cys) + AMP + diphosphate. The protein is Cysteine--tRNA ligase of Mycobacterium sp. (strain JLS).